The primary structure comprises 536 residues: 2,3-bisphosphoglycerate-independent phosphoglycerate mutase (536 aa).

The Mn(2+) site is built by Asp19 and Ser69. The active-site Phosphoserine intermediate is the Ser69. Residues His130, 160 to 161 (RD), Arg192, Arg198, 262 to 265 (RPDR), and Lys335 each bind substrate. The Mn(2+) site is built by Asp402, His406, Asp443, His444, and His461.

The protein belongs to the BPG-independent phosphoglycerate mutase family. Monomer. It depends on Mn(2+) as a cofactor.

It catalyses the reaction (2R)-2-phosphoglycerate = (2R)-3-phosphoglycerate. Its pathway is carbohydrate degradation; glycolysis; pyruvate from D-glyceraldehyde 3-phosphate: step 3/5. Functionally, catalyzes the interconversion of 2-phosphoglycerate and 3-phosphoglycerate. In Gloeobacter violaceus (strain ATCC 29082 / PCC 7421), this protein is 2,3-bisphosphoglycerate-independent phosphoglycerate mutase.